Consider the following 90-residue polypeptide: ESAT-6-like protein EsxE (90 aa).

Belongs to the WXG100 family. ESAT-6 subfamily.

Its subcellular location is the secreted. The protein is ESAT-6-like protein EsxE of Mycobacterium tuberculosis (strain CDC 1551 / Oshkosh).